A 211-amino-acid chain; its full sequence is Outer surface protein C (211 aa).

Positions 1 to 18 (MKKNTLSAILMTLFLFIS) are cleaved as a signal peptide. Residue Cys19 is the site of N-palmitoyl cysteine attachment. Cys19 carries the S-diacylglycerol cysteine lipid modification.

The protein belongs to the OspC lipoprotein family. As to quaternary structure, homodimer. Interacts with tick I.ricinus salivary protein Iric-1, Iric-2 and Iric-3. Binds human (host) plasminogen.

It localises to the cell outer membrane. Its subcellular location is the cell surface. Its function is as follows. Major immunodominant protein in mammalian hosts. Required for initial stages of mammalian infection. Inhibits macrophage-mediated phagocytosis of the bacteria. Binds human plasminogen; this probably confers an extracellular protease activity on the bacteria that allows it to traverse tissue. Interaction with tick I.ricinus salivary protein Salp15 protects the bacteria from antibody-mediated killing in vitro and in vivo. The sequence is that of Outer surface protein C from Borreliella burgdorferi (Lyme disease spirochete).